Reading from the N-terminus, the 504-residue chain is D-alanine--D-alanyl carrier protein ligase (504 aa).

Threonine 152–serine 153 contributes to the ATP binding site. Aspartate 197 lines the D-alanine pocket. Asparagine 292–threonine 297 contacts ATP. A D-alanine-binding site is contributed by valine 301. Residues aspartate 383, tyrosine 394–arginine 397, and lysine 492 contribute to the ATP site. Lysine 492 is a D-alanine binding site.

This sequence belongs to the ATP-dependent AMP-binding enzyme family. DltA subfamily.

It is found in the cytoplasm. It catalyses the reaction holo-[D-alanyl-carrier protein] + D-alanine + ATP = D-alanyl-[D-alanyl-carrier protein] + AMP + diphosphate. Its pathway is cell wall biogenesis; lipoteichoic acid biosynthesis. Functionally, catalyzes the first step in the D-alanylation of lipoteichoic acid (LTA), the activation of D-alanine and its transfer onto the D-alanyl carrier protein (Dcp) DltC. In an ATP-dependent two-step reaction, forms a high energy D-alanyl-AMP intermediate, followed by transfer of the D-alanyl residue as a thiol ester to the phosphopantheinyl prosthetic group of the Dcp. D-alanylation of LTA plays an important role in modulating the properties of the cell wall in Gram-positive bacteria, influencing the net charge of the cell wall. The chain is D-alanine--D-alanyl carrier protein ligase from Bacillus thuringiensis (strain Al Hakam).